Reading from the N-terminus, the 406-residue chain is MKRSHDSITRSINSDNDSETNMNSDNNNNNKPNQRKKINLNKKPSIFFIFDDLTDYETENKETTTIPPICHGIHCDHDPNSCIVPIIPDKFNNMTRLNLDNLIELGELFHCKLQKNFRNIPLERLAILRESLLKLNKTIGMNSIKESICEQLIYFLMDLEPNPQEMLHTVIQGPPGVGKSYVIDILAEIYLKMGYLSNGKINKVKLDELKGKYIGHSAPLTQKAIDNSIGGVLVLDEVYAIGNSDHLDSFSKEVIDTINRNLTEKAGKFVCIIAGYGEQIDKCFFAHNEGLRSRFRFRFSIDSYTPEELFEIFKLKVENDKWKLSESEINLITDFFRFNRDKFPYFGRDIETLLFHTKVAHSNRIVYNDNSGLNKTINLLDIKQGFAKFSLNNKETSNNDFNLMYL.

The tract at residues 1 to 37 (MKRSHDSITRSINSDNDSETNMNSDNNNNNKPNQRKK) is disordered. Residues 13–32 (NSDNDSETNMNSDNNNNNKP) show a composition bias toward low complexity. 173 to 180 (GPPGVGKS) contributes to the ATP binding site.

The protein belongs to the CbxX/CfxQ family.

This is Putative cfxQ-like protein R730 from Acanthamoeba polyphaga mimivirus (APMV).